The chain runs to 298 residues: Ethanolamine ammonia-lyase small subunit (298 aa).

The adenosylcob(III)alamin site is built by Val210, Glu231, and Cys261.

It belongs to the EutC family. The basic unit is a heterodimer which dimerizes to form tetramers. The heterotetramers trimerize; 6 large subunits form a core ring with 6 small subunits projecting outwards. Adenosylcob(III)alamin serves as cofactor.

It localises to the bacterial microcompartment. It catalyses the reaction ethanolamine = acetaldehyde + NH4(+). The protein operates within amine and polyamine degradation; ethanolamine degradation. Its function is as follows. Catalyzes the deamination of various vicinal amino-alcohols to oxo compounds. Allows this organism to utilize ethanolamine as the sole source of nitrogen and carbon in the presence of external vitamin B12. The sequence is that of Ethanolamine ammonia-lyase small subunit from Salmonella schwarzengrund (strain CVM19633).